Reading from the N-terminus, the 488-residue chain is Inosine-5'-monophosphate dehydrogenase (488 aa).

CBS domains are found at residues 94–150 and 154–215; these read IVSE…SKTV and MTKK…CKDE. Residues Asp249, 249–251, and 299–301 each bind NAD(+); these read DSS and GIG. The K(+) site is built by Gly301 and Gly303. Ser304 lines the IMP pocket. Cys306 serves as a coordination point for K(+). The active-site Thioimidate intermediate is Cys306. IMP is bound by residues 339 to 341, 362 to 363, and 386 to 390; these read DGG, GS, and YRGMG. The Proton acceptor role is filled by Arg402. Glu416 serves as a coordination point for IMP. Residues Glu470, Ser471, and His472 each coordinate K(+).

Belongs to the IMPDH/GMPR family. Homotetramer. K(+) serves as cofactor.

The enzyme catalyses IMP + NAD(+) + H2O = XMP + NADH + H(+). The protein operates within purine metabolism; XMP biosynthesis via de novo pathway; XMP from IMP: step 1/1. With respect to regulation, mycophenolic acid (MPA) is a non-competitive inhibitor that prevents formation of the closed enzyme conformation by binding to the same site as the amobile flap. In contrast, mizoribine monophosphate (MZP) is a competitive inhibitor that induces the closed conformation. MPA is a potent inhibitor of mammalian IMPDHs but a poor inhibitor of the bacterial enzymes. MZP is a more potent inhibitor of bacterial IMPDH. In terms of biological role, catalyzes the conversion of inosine 5'-phosphate (IMP) to xanthosine 5'-phosphate (XMP), the first committed and rate-limiting step in the de novo synthesis of guanine nucleotides, and therefore plays an important role in the regulation of cell growth. This chain is Inosine-5'-monophosphate dehydrogenase, found in Haemophilus influenzae (strain ATCC 51907 / DSM 11121 / KW20 / Rd).